Consider the following 470-residue polypeptide: Synaptotagmin-17 (470 aa).

Residues 54-112 (PPWLMASRSNDKDGDSVHTASDVPLTPRTNSPDGRRSSSDTSKSTYSLTRRISSLDSRR) are disordered. Low complexity predominate over residues 92-112 (SDTSKSTYSLTRRISSLDSRR). S114 and S115 each carry phosphoserine. C2 domains lie at 180–306 (QLGM…HWWK) and 317–451 (ELGE…EQWH).

This sequence belongs to the synaptotagmin family.

It is found in the membrane. Its function is as follows. Plays a role in dendrite formation by melanocytes. In Mus musculus (Mouse), this protein is Synaptotagmin-17 (Syt17).